A 389-amino-acid chain; its full sequence is Succinyl-diaminopimelate desuccinylase (389 aa).

Position 72 (His72) interacts with Zn(2+). Asp74 is an active-site residue. Residue Asp105 coordinates Zn(2+). Residue Glu144 is the Proton acceptor of the active site. Zn(2+) contacts are provided by Glu145, Glu173, and His362.

This sequence belongs to the peptidase M20A family. DapE subfamily. In terms of assembly, homodimer. It depends on Zn(2+) as a cofactor. Co(2+) serves as cofactor.

The enzyme catalyses N-succinyl-(2S,6S)-2,6-diaminopimelate + H2O = (2S,6S)-2,6-diaminopimelate + succinate. The protein operates within amino-acid biosynthesis; L-lysine biosynthesis via DAP pathway; LL-2,6-diaminopimelate from (S)-tetrahydrodipicolinate (succinylase route): step 3/3. Functionally, catalyzes the hydrolysis of N-succinyl-L,L-diaminopimelic acid (SDAP), forming succinate and LL-2,6-diaminopimelate (DAP), an intermediate involved in the bacterial biosynthesis of lysine and meso-diaminopimelic acid, an essential component of bacterial cell walls. This Nitrobacter hamburgensis (strain DSM 10229 / NCIMB 13809 / X14) protein is Succinyl-diaminopimelate desuccinylase.